The sequence spans 474 residues: Receptor-transporting protein 3 (474 aa).

The Cytoplasmic segment spans residues 1-453 (MMEEDIGDTE…SCCEAACNCM (453 aa)). The 3CxxC-type zinc-finger motif lies at 53 to 164 (TFARFHCPSC…SSNCEACLLG (112 aa)). A disordered region spans residues 175–304 (SKPPAPPLSP…ISCTSKPSTT (130 aa)). Polar residues-rich tracts occupy residues 197–228 (VTCS…NPTK) and 259–304 (VTCS…PSTT). The helical transmembrane segment at 454–474 (SQSPLCCLAFLILFLLLWYLL) threads the bilayer.

The protein belongs to the TMEM7 family. As to quaternary structure, interacts with TAS2R16. As to expression, expressed predominantly in the liver. Not detected in the olfactory epithelium.

Its subcellular location is the membrane. Functionally, promotes functional cell surface expression of the bitter taste receptors TAS2R16 and TAS2R43. The polypeptide is Receptor-transporting protein 3 (Rtp3) (Mus musculus (Mouse)).